A 278-amino-acid chain; its full sequence is Probable septum site-determining protein MinC (278 aa).

The interval 104-167 is disordered; it reads RTQQSVDPAP…ASHTPAAPQS (64 aa).

The protein belongs to the MinC family. As to quaternary structure, interacts with MinD and FtsZ.

Its function is as follows. Cell division inhibitor that blocks the formation of polar Z ring septums. Rapidly oscillates between the poles of the cell to destabilize FtsZ filaments that have formed before they mature into polar Z rings. Prevents FtsZ polymerization. This is Probable septum site-determining protein MinC from Bordetella avium (strain 197N).